The following is a 469-amino-acid chain: 3-isopropylmalate dehydratase large subunit (469 aa).

The [4Fe-4S] cluster site is built by C347, C410, and C413.

The protein belongs to the aconitase/IPM isomerase family. LeuC type 1 subfamily. As to quaternary structure, heterodimer of LeuC and LeuD. [4Fe-4S] cluster is required as a cofactor.

The catalysed reaction is (2R,3S)-3-isopropylmalate = (2S)-2-isopropylmalate. It participates in amino-acid biosynthesis; L-leucine biosynthesis; L-leucine from 3-methyl-2-oxobutanoate: step 2/4. Functionally, catalyzes the isomerization between 2-isopropylmalate and 3-isopropylmalate, via the formation of 2-isopropylmaleate. The polypeptide is 3-isopropylmalate dehydratase large subunit (Burkholderia mallei (strain NCTC 10247)).